The following is a 376-amino-acid chain: Succinyl-diaminopimelate desuccinylase (376 aa).

His64 provides a ligand contact to Zn(2+). The active site involves Asp66. Residue Asp97 participates in Zn(2+) binding. Catalysis depends on Glu131, which acts as the Proton acceptor. Zn(2+) is bound by residues Glu132, Glu160, and His347.

The protein belongs to the peptidase M20A family. DapE subfamily. In terms of assembly, homodimer. Zn(2+) serves as cofactor. Co(2+) is required as a cofactor.

The catalysed reaction is N-succinyl-(2S,6S)-2,6-diaminopimelate + H2O = (2S,6S)-2,6-diaminopimelate + succinate. It participates in amino-acid biosynthesis; L-lysine biosynthesis via DAP pathway; LL-2,6-diaminopimelate from (S)-tetrahydrodipicolinate (succinylase route): step 3/3. Its function is as follows. Catalyzes the hydrolysis of N-succinyl-L,L-diaminopimelic acid (SDAP), forming succinate and LL-2,6-diaminopimelate (DAP), an intermediate involved in the bacterial biosynthesis of lysine and meso-diaminopimelic acid, an essential component of bacterial cell walls. The protein is Succinyl-diaminopimelate desuccinylase of Wigglesworthia glossinidia brevipalpis.